We begin with the raw amino-acid sequence, 310 residues long: Probable RuBisCO transcriptional regulator (310 aa).

One can recognise an HTH lysR-type domain in the interval 6–63 (FTLDQLRILKAIASEGSFKKAAESLYISQPAVSLQIQNLEKQLNIPIFDRANRKAVFT). A DNA-binding region (H-T-H motif) is located at residues 23–42 (FKKAAESLYISQPAVSLQIQ).

The protein belongs to the LysR transcriptional regulatory family.

The protein resides in the plastid. It is found in the chloroplast. Its function is as follows. Trans-acting transcriptional regulator of RuBisCO genes (rbcL and rbcS) expression. The chain is Probable RuBisCO transcriptional regulator (rbcR) from Guillardia theta (Cryptophyte).